We begin with the raw amino-acid sequence, 61 residues long: Large ribosomal subunit protein uL30 (61 aa).

It belongs to the universal ribosomal protein uL30 family. In terms of assembly, part of the 50S ribosomal subunit.

The polypeptide is Large ribosomal subunit protein uL30 (Chlorobium luteolum (strain DSM 273 / BCRC 81028 / 2530) (Pelodictyon luteolum)).